The sequence spans 375 residues: Chaperone protein DnaJ (375 aa).

Residues 5–69 (DYYEVLGVSK…QKRAQYDQFG (65 aa)) enclose the J domain. The CR-type zinc finger occupies 132–214 (GKETIIEIPR…CGGTGKVKKR (83 aa)). Zn(2+)-binding residues include Cys-145, Cys-148, Cys-162, Cys-165, Cys-188, Cys-191, Cys-202, and Cys-205. 4 CXXCXGXG motif repeats span residues 145–152 (CETCKGSG), 162–169 (CSHCGGSG), 188–195 (CHHCEGTG), and 202–209 (CSDCGGTG).

The protein belongs to the DnaJ family. In terms of assembly, homodimer. Requires Zn(2+) as cofactor.

The protein localises to the cytoplasm. Participates actively in the response to hyperosmotic and heat shock by preventing the aggregation of stress-denatured proteins and by disaggregating proteins, also in an autonomous, DnaK-independent fashion. Unfolded proteins bind initially to DnaJ; upon interaction with the DnaJ-bound protein, DnaK hydrolyzes its bound ATP, resulting in the formation of a stable complex. GrpE releases ADP from DnaK; ATP binding to DnaK triggers the release of the substrate protein, thus completing the reaction cycle. Several rounds of ATP-dependent interactions between DnaJ, DnaK and GrpE are required for fully efficient folding. Also involved, together with DnaK and GrpE, in the DNA replication of plasmids through activation of initiation proteins. This chain is Chaperone protein DnaJ, found in Bacillus velezensis (strain DSM 23117 / BGSC 10A6 / LMG 26770 / FZB42) (Bacillus amyloliquefaciens subsp. plantarum).